Consider the following 218-residue polypeptide: 7-cyano-7-deazaguanine synthase (218 aa).

10–20 (FSGGQDSTTCL) is an ATP binding site. Zn(2+)-binding residues include cysteine 186, cysteine 195, cysteine 198, and cysteine 201.

Belongs to the QueC family. In terms of assembly, homodimer. Zn(2+) is required as a cofactor.

It catalyses the reaction 7-carboxy-7-deazaguanine + NH4(+) + ATP = 7-cyano-7-deazaguanine + ADP + phosphate + H2O + H(+). It participates in purine metabolism; 7-cyano-7-deazaguanine biosynthesis. Catalyzes the ATP-dependent conversion of 7-carboxy-7-deazaguanine (CDG) to 7-cyano-7-deazaguanine (preQ(0)). The polypeptide is 7-cyano-7-deazaguanine synthase (Exiguobacterium sibiricum (strain DSM 17290 / CCUG 55495 / CIP 109462 / JCM 13490 / 255-15)).